The following is a 90-amino-acid chain: Small ribosomal subunit protein uS15c (90 aa).

Belongs to the universal ribosomal protein uS15 family. In terms of assembly, part of the 30S ribosomal subunit.

It localises to the plastid. The protein resides in the chloroplast. In Nandina domestica (Heavenly bamboo), this protein is Small ribosomal subunit protein uS15c (rps15).